The primary structure comprises 88 residues: Small ribosomal subunit protein bS20 (88 aa).

It belongs to the bacterial ribosomal protein bS20 family.

Its function is as follows. Binds directly to 16S ribosomal RNA. This Heliobacterium modesticaldum (strain ATCC 51547 / Ice1) protein is Small ribosomal subunit protein bS20.